Reading from the N-terminus, the 468-residue chain is 3-isopropylmalate dehydratase large subunit (468 aa).

Residues Cys-347, Cys-407, and Cys-410 each coordinate [4Fe-4S] cluster.

Belongs to the aconitase/IPM isomerase family. LeuC type 1 subfamily. Heterodimer of LeuC and LeuD. [4Fe-4S] cluster is required as a cofactor.

The catalysed reaction is (2R,3S)-3-isopropylmalate = (2S)-2-isopropylmalate. The protein operates within amino-acid biosynthesis; L-leucine biosynthesis; L-leucine from 3-methyl-2-oxobutanoate: step 2/4. In terms of biological role, catalyzes the isomerization between 2-isopropylmalate and 3-isopropylmalate, via the formation of 2-isopropylmaleate. This chain is 3-isopropylmalate dehydratase large subunit, found in Rippkaea orientalis (strain PCC 8801 / RF-1) (Cyanothece sp. (strain PCC 8801)).